Here is a 330-residue protein sequence, read N- to C-terminus: Phosphate acyltransferase (330 aa).

Belongs to the PlsX family. As to quaternary structure, homodimer. Probably interacts with PlsY.

Its subcellular location is the cytoplasm. The enzyme catalyses a fatty acyl-[ACP] + phosphate = an acyl phosphate + holo-[ACP]. It participates in lipid metabolism; phospholipid metabolism. Catalyzes the reversible formation of acyl-phosphate (acyl-PO(4)) from acyl-[acyl-carrier-protein] (acyl-ACP). This enzyme utilizes acyl-ACP as fatty acyl donor, but not acyl-CoA. The chain is Phosphate acyltransferase from Bacillus licheniformis (strain ATCC 14580 / DSM 13 / JCM 2505 / CCUG 7422 / NBRC 12200 / NCIMB 9375 / NCTC 10341 / NRRL NRS-1264 / Gibson 46).